We begin with the raw amino-acid sequence, 288 residues long: 2-methoxy-6-polyprenyl-1,4-benzoquinol methylase, mitochondrial (288 aa).

A mitochondrion-targeting transit peptide spans 1-27 (MALRSVSRRLGSRILNQRSFVASLHSH). S-adenosyl-L-methionine-binding positions include Thr94, Asp130, and 160 to 161 (DA).

The protein belongs to the class I-like SAM-binding methyltransferase superfamily. MenG/UbiE family. In terms of assembly, component of a multi-subunit COQ enzyme complex.

It localises to the mitochondrion inner membrane. The catalysed reaction is a 2-methoxy-6-(all-trans-polyprenyl)benzene-1,4-diol + S-adenosyl-L-methionine = a 5-methoxy-2-methyl-3-(all-trans-polyprenyl)benzene-1,4-diol + S-adenosyl-L-homocysteine + H(+). It functions in the pathway cofactor biosynthesis; ubiquinone biosynthesis. Methyltransferase required for the conversion of 2-polyprenyl-6-methoxy-1,4-benzoquinol (DDMQH2) to 2-polyprenyl-3-methyl-6-methoxy-1,4-benzoquinol (DMQH2). The sequence is that of 2-methoxy-6-polyprenyl-1,4-benzoquinol methylase, mitochondrial from Arabidopsis thaliana (Mouse-ear cress).